We begin with the raw amino-acid sequence, 628 residues long: 2-oxoacid:ferredoxin oxidoreductase 2, subunit alpha (628 aa).

Residues 254–258 (YPITP) carry the YPITP motif motif. Residues Thr257 and Arg344 each contribute to the substrate site.

Heterodimer composed of an alpha and a beta subunit.

It catalyses the reaction a 2-oxocarboxylate + 2 oxidized [2Fe-2S]-[ferredoxin] + CoA = an acyl-CoA + 2 reduced [2Fe-2S]-[ferredoxin] + CO2 + H(+). Catalyzes the coenzyme A-dependent oxidative decarboxylation of different 2-oxoacids such as 2-oxoglutarate, pyruvate and 2-oxobutyrate to form their CoA derivatives. This Sulfurisphaera tokodaii (strain DSM 16993 / JCM 10545 / NBRC 100140 / 7) (Sulfolobus tokodaii) protein is 2-oxoacid:ferredoxin oxidoreductase 2, subunit alpha.